The primary structure comprises 666 residues: tRNA 5-methylaminomethyl-2-thiouridine biosynthesis bifunctional protein MnmC (666 aa).

Residues 1–245 are tRNA (mnm(5)s(2)U34)-methyltransferase; the sequence is MKQYAIQPAN…KREMLCGVMA (245 aa). Positions 270–666 are FAD-dependent cmnm(5)s(2)U34 oxidoreductase; that stretch reads IGGGIASALL…RKLLKGKAVK (397 aa).

In the N-terminal section; belongs to the methyltransferase superfamily. tRNA (mnm(5)s(2)U34)-methyltransferase family. It in the C-terminal section; belongs to the DAO family. It depends on FAD as a cofactor.

It is found in the cytoplasm. It catalyses the reaction 5-aminomethyl-2-thiouridine(34) in tRNA + S-adenosyl-L-methionine = 5-methylaminomethyl-2-thiouridine(34) in tRNA + S-adenosyl-L-homocysteine + H(+). Functionally, catalyzes the last two steps in the biosynthesis of 5-methylaminomethyl-2-thiouridine (mnm(5)s(2)U) at the wobble position (U34) in tRNA. Catalyzes the FAD-dependent demodification of cmnm(5)s(2)U34 to nm(5)s(2)U34, followed by the transfer of a methyl group from S-adenosyl-L-methionine to nm(5)s(2)U34, to form mnm(5)s(2)U34. This Citrobacter koseri (strain ATCC BAA-895 / CDC 4225-83 / SGSC4696) protein is tRNA 5-methylaminomethyl-2-thiouridine biosynthesis bifunctional protein MnmC.